Reading from the N-terminus, the 124-residue chain is CLAVATA3/ESR (CLE)-related protein 45 (124 aa).

An N-terminal signal peptide occupies residues 1–20 (MLGSSTRSMFFLLVCIGLLA). Residues Asn25 and Asn96 are each glycosylated (N-linked (GlcNAc...) asparagine). Positions 71-109 (LNKNRRVLEEVNKDKIKAEETQERKNKTEDSFKSSKRRV) form a coiled coil. The segment covering 87-103 (KAEETQERKNKTEDSFK) has biased composition (basic and acidic residues). Residues 87–124 (KAEETQERKNKTEDSFKSSKRRVRRGSDPIHNKAQPFS) are disordered.

It belongs to the CLV3/ESR signal peptide family. Binds to SKM1 present in the pollen grain, particularly under relatively high temperature (at 30 degrees Celsius). Interacts with BAM3, especially in roots. Expressed at low levels in flowers, especially in pistils. Present in vascular tissues. In roots, confined to protophloem and sieve element precursor cells.

It localises to the secreted. It is found in the extracellular space. Its function is as follows. Extracellular signal peptide that regulates cell fate. Represses root apical meristem maintenance. Represses protophloem differentiation in a BAM3-dependent manner. BRX, BAM3, and CLE45 act together to regulate the transition of protophloem cells from proliferation to differentiation, thus impinging on postembryonic growth capacity of the root meristem; this signaling pathway requires CRN and CLV2 and involves MAKR5 for its transduction/amplification. Triggers the accumulation of MAKR5 in developing sieve elements in a BAM3-dependent manner. Prevents, in a dose-dependent manner, auxin response in the root meristem thus leading in the repression of protophloem differentiation and periclinal sieve element precursor cell division. Promotes pollen tube growth prolongation in a SKM1 and SKM2-dependent manner, especially under relatively high temperature (at 30 degrees Celsius), thus conferring tolerance against high temperature probably through the maintenance of mitochondrial activity. Alleviates mitochondrial decay pollen tube in vitro culture. The sequence is that of CLAVATA3/ESR (CLE)-related protein 45 from Arabidopsis thaliana (Mouse-ear cress).